A 389-amino-acid chain; its full sequence is Phosphoribosylformylglycinamidine cyclo-ligase, chloroplastic (389 aa).

Residues 1-58 (MEARILQSSSSCYSSLYAVNRSRFSSVSSPKPFSVSFAQTTRTRTRVLSMSKKDGRTD) constitute a chloroplast transit peptide. The tract at residues 46 to 65 (RVLSMSKKDGRTDKDDDTDS) is disordered.

It belongs to the AIR synthase family.

The protein resides in the plastid. It is found in the chloroplast. The enzyme catalyses 2-formamido-N(1)-(5-O-phospho-beta-D-ribosyl)acetamidine + ATP = 5-amino-1-(5-phospho-beta-D-ribosyl)imidazole + ADP + phosphate + H(+). Its pathway is purine metabolism; IMP biosynthesis via de novo pathway; 5-amino-1-(5-phospho-D-ribosyl)imidazole from N(2)-formyl-N(1)-(5-phospho-D-ribosyl)glycinamide: step 2/2. The sequence is that of Phosphoribosylformylglycinamidine cyclo-ligase, chloroplastic (PUR5) from Arabidopsis thaliana (Mouse-ear cress).